The sequence spans 587 residues: Arginine--tRNA ligase (587 aa).

Residues 127-137 (PNLAKEMHVGH) carry the 'HIGH' region motif.

This sequence belongs to the class-I aminoacyl-tRNA synthetase family. As to quaternary structure, monomer.

The protein localises to the cytoplasm. It carries out the reaction tRNA(Arg) + L-arginine + ATP = L-arginyl-tRNA(Arg) + AMP + diphosphate. This chain is Arginine--tRNA ligase, found in Pseudomonas aeruginosa (strain LESB58).